Consider the following 359-residue polypeptide: Non-functional pseudokinase ZRK2 (359 aa).

Positions 1 to 10 (MKSMVKKLKQ) are enriched in basic residues. The tract at residues 1 to 20 (MKSMVKKLKQSLRSGSLEKR) is disordered. The Protein kinase domain occupies 64 to 356 (LKATSNFGSS…KELKQIETLF (293 aa)). Residues 70 to 78 (FGSSCFVTA) and K97 each bind ATP.

It belongs to the protein kinase superfamily. Ser/Thr protein kinase family. ZRK subfamily.

This is Non-functional pseudokinase ZRK2 from Arabidopsis thaliana (Mouse-ear cress).